An 88-amino-acid polypeptide reads, in one-letter code: MRLFLSLPVLVVVLAMVLEGPAPTQAAPEISSTLGRIPDKLKEFGNTLEDKARAAIESIKQSDIPAKTRNWFSETFHKVKEQLKTAFS.

The first 26 residues, 1–26, serve as a signal peptide directing secretion; it reads MRLFLSLPVLVVVLAMVLEGPAPTQA.

It belongs to the apolipoprotein C1 family.

Its subcellular location is the secreted. Inhibitor of lipoprotein binding to the low density lipoprotein (LDL) receptor, LDL receptor-related protein, and very low density lipoprotein (VLDL) receptor. Associates with high density lipoproteins (HDL) and the triacylglycerol-rich lipoproteins in the plasma and makes up about 10% of the protein of the VLDL and 2% of that of HDL. Appears to interfere directly with fatty acid uptake and is also the major plasma inhibitor of cholesteryl ester transfer protein (CETP). Binds free fatty acids and reduces their intracellular esterification. Modulates the interaction of APOE with beta-migrating VLDL and inhibits binding of beta-VLDL to the LDL receptor-related protein. The protein is Apolipoprotein C-I (APOC1) of Leptonychotes weddellii (Weddell seal).